The sequence spans 275 residues: Galaxin-2 (275 aa).

Residues 1–20 (MTRFTSIGLCAVLLFNVCSC) form the signal peptide.

In terms of tissue distribution, component of the acid-insoluble and acid-soluble organic matrix of the aragonitic skeleton (at protein level).

The protein resides in the secreted. In Acropora millepora (Staghorn coral), this protein is Galaxin-2.